We begin with the raw amino-acid sequence, 209 residues long: Ribosomal RNA large subunit methyltransferase E (209 aa).

Residues G63, W65, D83, D99, and D124 each contribute to the S-adenosyl-L-methionine site. The active-site Proton acceptor is the K164.

This sequence belongs to the class I-like SAM-binding methyltransferase superfamily. RNA methyltransferase RlmE family.

It is found in the cytoplasm. It carries out the reaction uridine(2552) in 23S rRNA + S-adenosyl-L-methionine = 2'-O-methyluridine(2552) in 23S rRNA + S-adenosyl-L-homocysteine + H(+). In terms of biological role, specifically methylates the uridine in position 2552 of 23S rRNA at the 2'-O position of the ribose in the fully assembled 50S ribosomal subunit. This Pectobacterium atrosepticum (strain SCRI 1043 / ATCC BAA-672) (Erwinia carotovora subsp. atroseptica) protein is Ribosomal RNA large subunit methyltransferase E.